Consider the following 875-residue polypeptide: Probable dipeptidyl-aminopeptidase B (875 aa).

The segment at Met-1–Lys-90 is disordered. Residues Met-1–Lys-98 lie on the Cytoplasmic side of the membrane. Positions Ser-19 to Ser-28 are enriched in low complexity. Positions Arg-33–Ser-46 are enriched in basic and acidic residues. A helical; Signal-anchor for type II membrane protein transmembrane segment spans residues Val-99–Leu-119. Topologically, residues Thr-120–Ser-875 are vacuolar. 2 N-linked (GlcNAc...) asparagine glycosylation sites follow: Asn-354 and Asn-567. Positions Val-689–Ser-715 are disordered. The span at Arg-699–Thr-708 shows a compositional bias: basic residues. Ser-726 functions as the Charge relay system in the catalytic mechanism. N-linked (GlcNAc...) asparagine glycosylation occurs at Asn-785. Catalysis depends on charge relay system residues Asp-803 and His-836.

The protein belongs to the peptidase S9B family.

Its subcellular location is the vacuole membrane. It carries out the reaction Release of an N-terminal dipeptide, Xaa-Yaa-|-Zaa-, from a polypeptide, preferentially when Yaa is Pro, provided Zaa is neither Pro nor hydroxyproline.. Functionally, type IV dipeptidyl-peptidase which removes N-terminal dipeptides sequentially from polypeptides having unsubstituted N-termini provided that the penultimate residue is proline. This Verticillium alfalfae (strain VaMs.102 / ATCC MYA-4576 / FGSC 10136) (Verticillium wilt of alfalfa) protein is Probable dipeptidyl-aminopeptidase B (DAPB).